The following is a 147-amino-acid chain: MSQTRDLQGGKAFGLLKAQQEERLDEINKQFLDDPKYSSDEDLLSKLEGFKEKYMEFDLNGNGDIDIMSLKRMLEKLGVPKTHLELKKLIGEVSSGSGETFSYPDFLRMMLGKRSAILKMILMYEEKAREKEKPTGPPAKKAISELP.

N-acetylserine is present on S2. An N6-acetyllysine modification is found at K11. Position 39 is a phosphoserine (S39). EF-hand domains are found at residues 45-80 and 81-115; these read SKLEGFKEKYMEFDLNGNGDIDIMSLKRMLEKLGVP and KTHLELKKLIGEVSSGSGETFSYPDFLRMMLGKRS. Ca(2+) is bound by residues D58, N60, N62, D64, T100, and D105. A disordered region spans residues 128–147; the sequence is AREKEKPTGPPAKKAISELP.

In terms of assembly, homodimer (Potential). Monomer. Interacts with LCP1. In terms of processing, phosphorylated on serine residues.

It is found in the cytoplasm. Its subcellular location is the cytoskeleton. The protein resides in the cell projection. The protein localises to the ruffle membrane. It localises to the phagocytic cup. Actin-binding protein that enhances membrane ruffling and RAC activation. Enhances the actin-bundling activity of LCP1. Binds calcium. Plays a role in RAC signaling and in phagocytosis. May play a role in macrophage activation and function. Promotes the proliferation of vascular smooth muscle cells and of T-lymphocytes. Enhances lymphocyte migration. Plays a role in vascular inflammation. This is Allograft inflammatory factor 1 (AIF1) from Macaca mulatta (Rhesus macaque).